The chain runs to 310 residues: Elongation factor Ts (310 aa).

Residues 80-83 are involved in Mg(2+) ion dislocation from EF-Tu; sequence TDFV.

It belongs to the EF-Ts family.

It is found in the cytoplasm. Associates with the EF-Tu.GDP complex and induces the exchange of GDP to GTP. It remains bound to the aminoacyl-tRNA.EF-Tu.GTP complex up to the GTP hydrolysis stage on the ribosome. The polypeptide is Elongation factor Ts (Methylocella silvestris (strain DSM 15510 / CIP 108128 / LMG 27833 / NCIMB 13906 / BL2)).